Consider the following 374-residue polypeptide: Alanine racemase (374 aa).

Residue K44 is the Proton acceptor; specific for D-alanine of the active site. Position 44 is an N6-(pyridoxal phosphate)lysine (K44). R139 is a substrate binding site. The Proton acceptor; specific for L-alanine role is filled by Y269. M317 contributes to the substrate binding site.

This sequence belongs to the alanine racemase family. It depends on pyridoxal 5'-phosphate as a cofactor.

It carries out the reaction L-alanine = D-alanine. It participates in amino-acid biosynthesis; D-alanine biosynthesis; D-alanine from L-alanine: step 1/1. Its function is as follows. Catalyzes the interconversion of L-alanine and D-alanine. May also act on other amino acids. This chain is Alanine racemase (alr), found in Bordetella avium (strain 197N).